A 777-amino-acid chain; its full sequence is MRLKISLSKEPKHQELVSCVGWTTAEELYSCSDDHQIVKWNLLTSETSLIVKLPDDIYPIDLHWFPKSLGIKKQTQAESFVLTSSDGKFHLISKLGRVEKSVEAHCGAVLAGRWNYEGTALVTVGEDGQVKIWSKTGMLRSTLAQQGTPVYSVAWGPDSEKVLYTAGKQLIIKPLQPNAKVLQWKAHDGIILKVDWNSVNDLILSAGEDCKYKVWDSYGRVLYGSQPHEHPITSVAWAPDGELFAVGSFHTLRLCDKTGWSYALEKPNTGSIFNIAWSIDGTQIAGACGNGHVVFAHVVEQRWEWKNFQVTLTKRRTMQVRNVLNDAVDLLEFRDRVIKASLNHAHLVVSTSLQCYVFSTKNWNTPLIFDLKEGTVSLILQAERHFLLVDGGGIYLHSYEGRFISSPKFPGMRTDILNAQTVSLSNDTIAIKDKADEKIIFLFEASTGKPLGDGKLLSHKNEISEIALDQKGLTNDRKIAFIDKNRDLYITSVKRFGKEEQIIKLGTMVHTLAWCDTCNILCGIQDTRFTVWYYPNTIYVDRDILPKTLYERDASEYSKNPHIVSFVGNQVTIRRADGSLVHISISPYPAILHEYVSSSKWEEAVRLCRFVKEQSMWACLAAMAVANRDMVTAEIAYAAVGEIDKVRYINAIKDLPSRESKMAHILMFSGNIQEAETVLLQAGLVYQAIQININLYNWERALELAVKYKTHVDTVLAYRQKFLDTFGKQETNKRYLQYAEGLQIDWEKIKAKIEMEITKERDRSSSGQSSKSVGLKH.

WD repeat units follow at residues 12-50 (KHQE…TSLI), 104-143 (AHCG…RSTL), 145-185 (QQGT…LQWK), 186-225 (AHDG…LYGS), 227-265 (PHEH…YALE), 267-306 (PNTG…WEWK), and 504-542 (KLGT…YVDR).

In terms of assembly, component of the IFT complex B, at least composed of IFT20, IFT22, IFT25, IFT27, IFT46, IFT52, TRAF3IP1/IFT54, IFT57, IFT74, IFT80, IFT81, and IFT88. Interacts with IFT88. Interacts with IFT57 and IFT70B.

It localises to the cytoplasm. The protein resides in the cytoskeleton. It is found in the cilium basal body. Its subcellular location is the cilium axoneme. Component of the intraflagellar transport (IFT) complex B, which is essential for the development and maintenance of motile and sensory cilia. In Mus musculus (Mouse), this protein is Intraflagellar transport protein 80 homolog (Ift80).